Consider the following 50-residue polypeptide: Insulin-1 (50 aa).

Disulfide bonds link cysteine 7-cysteine 36, cysteine 19-cysteine 49, and cysteine 35-cysteine 40.

This sequence belongs to the insulin family. Heterodimer of a B chain and an A chain linked by two disulfide bonds.

It localises to the secreted. Its function is as follows. Insulin decreases blood glucose concentration. It increases cell permeability to monosaccharides, amino acids and fatty acids. It accelerates glycolysis, the pentose phosphate cycle, and glycogen synthesis in liver. The protein is Insulin-1 of Katsuwonus pelamis (Skipjack tuna).